Reading from the N-terminus, the 213-residue chain is Chromosome segregation in meiosis protein 2 (213 aa).

It belongs to the CSM2 family. Component of the SHU complex composed of at least CSM2, PSY3, SHU1 and SHU2.

It localises to the cytoplasm. The protein localises to the nucleus. Involved in chromosome segregation during meiosis. Promotes efficient recombinational repair and functions in the protection of the genome from spontaneous and induced DNA damage like mutations and gross chromosomal rearrangements (GCRs). The polypeptide is Chromosome segregation in meiosis protein 2 (CSM2) (Saccharomyces cerevisiae (strain ATCC 204508 / S288c) (Baker's yeast)).